A 239-amino-acid chain; its full sequence is MSLMKEMLSAGVHFGHKKAFWNPQMKEYIFGINHGVHIINLEKTVPLFQDAVNFVGKTVANGGKILFVGTKRQAQDIVEAEAKRCGMPFVSHRWLGGMLTNYKTVRQSIKRLAQLEKMREDGTLESLTKKEMLQNIRTIEKLEKVLGGIKEMGGLPDAIVVIDSNKEHIAIQEAQKLGIKVVAIVDTNSNPEGIDYIIPGNDDAVKSISFYMKKFADAVIDAQGLDRAVEAKADEAAQA.

It belongs to the universal ribosomal protein uS2 family.

This chain is Small ribosomal subunit protein uS2, found in Francisella tularensis subsp. tularensis (strain WY96-3418).